The following is a 221-amino-acid chain: 2-amino-5-formylamino-6-ribosylaminopyrimidin-4(3H)-one 5'-monophosphate deformylase (221 aa).

Fe cation-binding residues include E29, H31, D40, and H108.

It belongs to the creatininase superfamily. FAPy deformylase family. Homodimer. Fe(2+) is required as a cofactor. Zn(2+) serves as cofactor.

The catalysed reaction is 2-amino-5-formylamino-6-(5-phospho-D-ribosylamino)pyrimidin-4(3H)-one + H2O = 2,5-diamino-6-(1-D-ribosylamino)pyrimidin-4(3H)-one 5'-phosphate + formate + H(+). Its pathway is cofactor biosynthesis; coenzyme F420 biosynthesis. It functions in the pathway cofactor biosynthesis; riboflavin biosynthesis. Catalyzes the hydrolysis of the formamide of 2-amino-5-formylamino-6-ribosylamino-4(3H)-pyrimidinone 5'-monophosphate (FAPy) to form 2,5-diamino-6-ribosylamino-4(3H)-pyrimidinone 5'-phosphate (APy). The polypeptide is 2-amino-5-formylamino-6-ribosylaminopyrimidin-4(3H)-one 5'-monophosphate deformylase (Methanococcus maripaludis (strain C5 / ATCC BAA-1333)).